A 111-amino-acid polypeptide reads, in one-letter code: Ribosome-binding factor A (111 aa).

The protein belongs to the RbfA family. Monomer. Binds 30S ribosomal subunits, but not 50S ribosomal subunits or 70S ribosomes.

The protein localises to the cytoplasm. Functionally, one of several proteins that assist in the late maturation steps of the functional core of the 30S ribosomal subunit. Associates with free 30S ribosomal subunits (but not with 30S subunits that are part of 70S ribosomes or polysomes). Required for efficient processing of 16S rRNA. May interact with the 5'-terminal helix region of 16S rRNA. The polypeptide is Ribosome-binding factor A (Helicobacter pylori (strain Shi470)).